The chain runs to 545 residues: Beta-sesquiphellandrene synthase (545 aa).

Mg(2+)-binding residues include Asp299, Asp303, Asn443, Ser447, and Glu451. Residues 299-303 carry the DDXXD motif motif; the sequence is DDIMD.

The protein belongs to the terpene synthase family. The cofactor is Mg(2+). Mn(2+) serves as cofactor.

It is found in the cytoplasm. It catalyses the reaction (2E,6E)-farnesyl diphosphate = beta-sesquiphellandrene + diphosphate. The protein operates within secondary metabolite biosynthesis; terpenoid biosynthesis. Functionally, sesquiterpene synthase converting farnesyl diphosphate into beta-sesquiphellandrene and six minor products, zingiberene, 7-epi-sesquithujene, sesquisabinene A, (E)-alpha-bergamotene, (E)-beta-farnesene and beta-bisabolene. Can also accept geranyl diphosphate as substrate, producing nine monoterpenes, with myrcene and limonene as the major products. The polypeptide is Beta-sesquiphellandrene synthase (TPS2) (Sorghum bicolor (Sorghum)).